The sequence spans 478 residues: Metalloendopeptidase OMA1, mitochondrial (478 aa).

Positions 134–164 (LGRSIRKWWVALPANKKQLFREWSWRRRWHF) are stress-sensor region. The helical transmembrane segment at 163 to 183 (HFLGAGTGLLFIASLFFFTHL) threads the bilayer. Position 296 (histidine 296) interacts with Zn(2+). Residue glutamate 297 is part of the active site. Zn(2+) is bound by residues histidine 300 and glutamate 361. A disulfide bridge links cysteine 376 with cysteine 434.

The protein belongs to the peptidase M48 family. Homooligomer. Zn(2+) is required as a cofactor. In terms of processing, autocatalytically cleaved in response to mitochondrial depolarization both at the N-terminus and C-terminus to generate the short active form (S-OMA1). The S-OMA1 form is unstable. May form a redox-dependent disulfide bond. Exists in a semi-oxidized state and is activated by prolonged hypoxia.

Its subcellular location is the mitochondrion inner membrane. Protease activity is activated upon autocatalytic cleavage in response to mitochondrial depolarization. In terms of biological role, metalloprotease that is part of the quality control system in the inner membrane of mitochondria. Activated in response to various mitochondrial stress, leading to the proteolytic cleavage of target proteins, such as opa1 and dele1. Involved in the fusion of the mitochondrial inner membranes by mediating cleavage of opa1 at S1 position, generating the soluble opa1 (S-opa1), which cooperates with the membrane form (L-opa1) to coordinate the fusion of mitochondrial inner membranes. Following stress conditions that induce loss of mitochondrial membrane potential, mediates cleavage of opa1, leading to excess production of soluble opa1 (S-opa1) and negative regulation of mitochondrial fusion. Also acts as an activator of the integrated stress response (ISR): in response to mitochondrial stress, mediates cleavage of dele1 to generate the processed form of dele1 (S-DELE1), which translocates to the cytosol and activates eif2ak1/hri to trigger the ISR. Required for the stability of the respiratory supercomplexes. The chain is Metalloendopeptidase OMA1, mitochondrial from Danio rerio (Zebrafish).